The primary structure comprises 645 residues: Protein FAM47B (645 aa).

Composition is skewed to basic and acidic residues over residues 1 to 11 (MGDRRPQDRPR), 238 to 251 (EPPE…RVDP), and 288 to 299 (PETRVSHLHPEP). Disordered stretches follow at residues 1 to 23 (MGDR…WYCD) and 168 to 321 (AREK…SLCP).

This sequence belongs to the FAM47 family.

The polypeptide is Protein FAM47B (FAM47B) (Homo sapiens (Human)).